Reading from the N-terminus, the 155-residue chain is UPF0735 ACT domain-containing protein CA_C1234 (155 aa).

The ACT domain occupies 79–154 (TISILIEHRR…NVLKVEIVAM (76 aa)).

Belongs to the UPF0735 family.

The chain is UPF0735 ACT domain-containing protein CA_C1234 from Clostridium acetobutylicum (strain ATCC 824 / DSM 792 / JCM 1419 / IAM 19013 / LMG 5710 / NBRC 13948 / NRRL B-527 / VKM B-1787 / 2291 / W).